Consider the following 128-residue polypeptide: Conopressin-conophysin (128 aa).

The N-terminal stretch at 1-27 is a signal peptide; that stretch reads MTRSAMQMGRLTLVLCLLLLLLLTTQA. Cys-28 and Cys-33 are oxidised to a cystine. Glycine amide is present on Gly-36. The propeptide occupies 37–44; that stretch reads GKRDVDER. 7 disulfides stabilise this stretch: Cys-50/Cys-90, Cys-53/Cys-64, Cys-58/Cys-80, Cys-65/Cys-70, Cys-97/Cys-115, Cys-109/Cys-127, and Cys-116/Cys-121.

This sequence belongs to the vasopressin/oxytocin family. As to expression, expressed by the venom gland.

Its subcellular location is the secreted. Its function is as follows. Targets vasopressin-oxytocin related receptors. Is more active on fish receptors than on their human counterparts, supporting an evolved role of this conopressin in the envenomation process. Acts as an agonist on zebrafish vasopressin receptors V1a1R (EC(50)=10.6 nM), V1a2R (EC(50)=44.06 nM, partial agonist), V2R (EC(50)=299.2 nM) and oxytocin receptor (EC(50)=353.73 nM, partial agonist). Shows a weaker activity on human receptors AVPR1B (EC(50)=51.92 nM), AVPR1A (EC(50)=123.78 nM), AVPR2 (EC(50)=299.2 nM) and oxytocin (OXTR) receptor (EC(50)=455.66 nM, partial agonist). In vivo, exhibits grooming and scratching behavior in mice, following intracerebral injection. The chain is Conopressin-conophysin from Conus geographus (Geography cone).